Here is a 578-residue protein sequence, read N- to C-terminus: Phosphoenolpyruvate-protein phosphotransferase (578 aa).

His195 acts as the Tele-phosphohistidine intermediate in catalysis. Residues Arg302 and Arg338 each coordinate phosphoenolpyruvate. The Mg(2+) site is built by Glu437 and Asp461. Phosphoenolpyruvate is bound by residues 460–461 (ND) and Arg471. Cys508 (proton donor) is an active-site residue.

Belongs to the PEP-utilizing enzyme family. As to quaternary structure, homodimer. It depends on Mg(2+) as a cofactor.

The protein localises to the cytoplasm. It carries out the reaction L-histidyl-[protein] + phosphoenolpyruvate = N(pros)-phospho-L-histidyl-[protein] + pyruvate. Functionally, general (non sugar-specific) component of the phosphoenolpyruvate-dependent sugar phosphotransferase system (sugar PTS). This major carbohydrate active-transport system catalyzes the phosphorylation of incoming sugar substrates concomitantly with their translocation across the cell membrane. Enzyme I transfers the phosphoryl group from phosphoenolpyruvate (PEP) to the phosphoryl carrier protein (HPr). The sequence is that of Phosphoenolpyruvate-protein phosphotransferase (ptsI) from Bacillus sp. (strain S).